A 745-amino-acid chain; its full sequence is 1,4-alpha-glucan branching enzyme GlgB (745 aa).

Residue Asp-416 is the Nucleophile of the active site. The active-site Proton donor is the Glu-469.

Belongs to the glycosyl hydrolase 13 family. GlgB subfamily. Monomer.

It carries out the reaction Transfers a segment of a (1-&gt;4)-alpha-D-glucan chain to a primary hydroxy group in a similar glucan chain.. It participates in glycan biosynthesis; glycogen biosynthesis. In terms of biological role, catalyzes the formation of the alpha-1,6-glucosidic linkages in glycogen by scission of a 1,4-alpha-linked oligosaccharide from growing alpha-1,4-glucan chains and the subsequent attachment of the oligosaccharide to the alpha-1,6 position. The sequence is that of 1,4-alpha-glucan branching enzyme GlgB from Shewanella sp. (strain W3-18-1).